A 162-amino-acid chain; its full sequence is Photosystem II extrinsic protein V (162 aa).

An N-terminal signal peptide occupies residues 1–25 (MFKKFSALFTLLFTLCLVNPMLVYS). Residues C62, C65, H66, and H117 each contribute to the heme c site.

Belongs to the cytochrome c family. PsbV subfamily. In terms of assembly, PSII is composed of 1 copy each of membrane proteins PsbA, PsbB, PsbC, PsbD, PsbE, PsbF, PsbH, PsbI, PsbJ, PsbK, PsbL, PsbM, PsbT, PsbX, PsbY, PsbZ, Psb30/Ycf12, at least 3 peripheral proteins of the oxygen-evolving complex and a large number of cofactors. It forms dimeric complexes. Heme c serves as cofactor.

It is found in the plastid. The protein resides in the chloroplast thylakoid membrane. In terms of biological role, one of the extrinsic, lumenal subunits of photosystem II (PSII). PSII is a light-driven water plastoquinone oxidoreductase, using light energy to abstract electrons from H(2)O, generating a proton gradient subsequently used for ATP formation. The extrinsic proteins stabilize the structure of photosystem II oxygen-evolving complex (OEC), the ion environment of oxygen evolution and protect the OEC against heat-induced inactivation. The protein is Photosystem II extrinsic protein V of Guillardia theta (Cryptophyte).